We begin with the raw amino-acid sequence, 59 residues long: Small integral membrane protein 30 (59 aa).

The N-terminal stretch at 1–24 (MTSVSTQLSLVLMSLLLVLPVVEA) is a signal peptide. Topologically, residues 25-29 (VEAGD) are extracellular. The chain crosses the membrane as a helical span at residues 30-50 (AIALLLGVVLSITGICACLGV). At 51–59 (YARKRNGQM) the chain is on the cytoplasmic side.

Interacts (via transmembrane domain) with antiviral protein MAVS (via transmembrane domain); the interaction disrupts MAVS interaction with RIGI and inhibits MAVS aggregation, resulting in the repression of type I interferon signaling and innate immune responses.

The protein localises to the endoplasmic reticulum membrane. It localises to the mitochondrion membrane. Its function is as follows. Negatively regulates antiviral innate immune responses. Disrupts the interaction of antiviral protein MAVS with innate immune receptor RIGI and inhibits MAVS aggregation, resulting in the repression of type I interferon signaling and innate immune responses. This Homo sapiens (Human) protein is Small integral membrane protein 30.